Consider the following 230-residue polypeptide: TPR repeat-containing protein BB_0298 (230 aa).

TPR repeat units lie at residues 69–102 (ARFF…NPNN) and 183–216 (FEFL…ASTE).

In Borreliella burgdorferi (strain ATCC 35210 / DSM 4680 / CIP 102532 / B31) (Borrelia burgdorferi), this protein is TPR repeat-containing protein BB_0298.